The primary structure comprises 241 residues: Serine protease 58 (241 aa).

The first 17 residues, 1 to 17 (MKFILLWALLNLTVALA), serve as a signal peptide directing secretion. Positions 18-239 (FNPDYTVSST…YIPWIENVIQ (222 aa)) constitute a Peptidase S1 domain. C41 and C57 are joined by a disulfide. Active-site charge relay system residues include H56 and D101. 3 disulfide bridges follow: C133–C201, C165–C180, and C191–C215. N-linked (GlcNAc...) asparagine glycosylation is found at N156 and N173. S195 serves as the catalytic Charge relay system.

This sequence belongs to the peptidase S1 family.

It localises to the secreted. The catalysed reaction is Preferential cleavage: Arg-|-Xaa, Lys-|-Xaa.. The chain is Serine protease 58 (PRSS58) from Homo sapiens (Human).